The sequence spans 207 residues: Fibroblast growth factor 18 (207 aa).

An N-terminal signal peptide occupies residues 1–27 (MYSAPSACTCLCLHFLLLCFQVQVLAA). N39 carries an N-linked (GlcNAc...) asparagine glycan. Residues C109 and C127 are joined by a disulfide bond. A glycan (N-linked (GlcNAc...) asparagine) is linked at N137.

This sequence belongs to the heparin-binding growth factors family. As to quaternary structure, interacts with FGFR3 and FGFR4.

The protein localises to the secreted. Its function is as follows. Plays an important role in the regulation of cell proliferation, cell differentiation and cell migration. Required for normal ossification and bone development. Stimulates hepatic and intestinal proliferation. This chain is Fibroblast growth factor 18 (Fgf18), found in Mus musculus (Mouse).